Reading from the N-terminus, the 163-residue chain is Nucleotide-binding protein YajQ (163 aa).

The protein belongs to the YajQ family.

Nucleotide-binding protein. The sequence is that of Nucleotide-binding protein YajQ from Salmonella heidelberg (strain SL476).